A 332-amino-acid chain; its full sequence is Putative threonine dehydratase (332 aa).

K56 carries the N6-(pyridoxal phosphate)lysine modification.

The protein belongs to the serine/threonine dehydratase family. Pyridoxal 5'-phosphate serves as cofactor.

The enzyme catalyses L-threonine = 2-oxobutanoate + NH4(+). The protein operates within amino-acid biosynthesis; L-isoleucine biosynthesis; 2-oxobutanoate from L-threonine: step 1/1. The protein is Putative threonine dehydratase of Sinorhizobium fredii (strain NBRC 101917 / NGR234).